A 69-amino-acid polypeptide reads, in one-letter code: Pleurain-A4 (69 aa).

The first 22 residues, 1 to 22 (MFTLKKTLLLLFFLGTISISLC), serve as a signal peptide directing secretion. Residues 23-43 (KQERDADEDDGRKMTEEEVKR) constitute a propeptide that is removed on maturation. Cysteines 63 and 69 form a disulfide.

It belongs to the frog skin active peptide (FSAP) family. Pleurain subfamily. As to expression, expressed by the skin glands.

The protein localises to the secreted. Antimicrobial peptide. Has activity against Gram-positive and -negative bacteria, and fungi. Has little hemolytic activity on red blood cells. The sequence is that of Pleurain-A4 from Nidirana pleuraden (Yunnan pond frog).